The sequence spans 152 residues: Transcriptional regulator MraZ (152 aa).

SpoVT-AbrB domains follow at residues 5-52 (ATLV…PLPE) and 81-124 (ASEC…DETT).

It belongs to the MraZ family. As to quaternary structure, forms oligomers.

Its subcellular location is the cytoplasm. It is found in the nucleoid. In terms of biological role, negatively regulates its own expression and that of the subsequent genes in the proximal part of the division and cell wall (dcw) gene cluster. Acts by binding directly to DNA. May also regulate the expression of genes outside the dcw cluster. The chain is Transcriptional regulator MraZ from Klebsiella pneumoniae subsp. pneumoniae (strain ATCC 700721 / MGH 78578).